The following is a 161-amino-acid chain: UPF0225 protein HI_0277 (161 aa).

The protein belongs to the UPF0225 family.

The protein is UPF0225 protein HI_0277 of Haemophilus influenzae (strain ATCC 51907 / DSM 11121 / KW20 / Rd).